We begin with the raw amino-acid sequence, 278 residues long: Elongation factor Ts (278 aa).

The interval 79–82 (TDFV) is involved in Mg(2+) ion dislocation from EF-Tu.

This sequence belongs to the EF-Ts family.

Its subcellular location is the cytoplasm. Its function is as follows. Associates with the EF-Tu.GDP complex and induces the exchange of GDP to GTP. It remains bound to the aminoacyl-tRNA.EF-Tu.GTP complex up to the GTP hydrolysis stage on the ribosome. In Borrelia recurrentis (strain A1), this protein is Elongation factor Ts.